We begin with the raw amino-acid sequence, 238 residues long: Sugar fermentation stimulation protein homolog (238 aa).

Belongs to the SfsA family.

This is Sugar fermentation stimulation protein homolog from Vibrio vulnificus (strain YJ016).